Reading from the N-terminus, the 1015-residue chain is Probable beta-galactosidase B (1015 aa).

Residues methionine 1–alanine 21 form the signal peptide. The N-linked (GlcNAc...) asparagine glycan is linked to asparagine 23. Tyrosine 90 is a substrate binding site. N-linked (GlcNAc...) asparagine glycosylation is present at asparagine 100. 3 residues coordinate substrate: asparagine 135, alanine 136, and glutamate 137. The N-linked (GlcNAc...) asparagine glycan is linked to asparagine 172. Residue asparagine 195 coordinates substrate. The active-site Proton donor is glutamate 196. N-linked (GlcNAc...) asparagine glycosylation is present at asparagine 211. Tyrosine 265 serves as a coordination point for substrate. An intrachain disulfide couples cysteine 271 to cysteine 324. Glutamate 308 acts as the Nucleophile in catalysis. A substrate-binding site is contributed by tyrosine 373. Residues asparagine 411, asparagine 441, asparagine 456, asparagine 554, asparagine 679, asparagine 735, asparagine 775, asparagine 821, and asparagine 878 are each glycosylated (N-linked (GlcNAc...) asparagine).

It belongs to the glycosyl hydrolase 35 family.

The protein localises to the secreted. The enzyme catalyses Hydrolysis of terminal non-reducing beta-D-galactose residues in beta-D-galactosides.. In terms of biological role, cleaves beta-linked terminal galactosyl residues from gangliosides, glycoproteins, and glycosaminoglycans. The chain is Probable beta-galactosidase B (lacB) from Neosartorya fischeri (strain ATCC 1020 / DSM 3700 / CBS 544.65 / FGSC A1164 / JCM 1740 / NRRL 181 / WB 181) (Aspergillus fischerianus).